The chain runs to 499 residues: Leukocyte immunoglobulin-like receptor subfamily A member 4 (499 aa).

The N-terminal stretch at 1–23 is a signal peptide; sequence MTLILTSLLFFGLSLGPRTRVQA. Ig-like C2-type domains lie at 24-118, 123-213, 224-313, and 324-413; these read ENLL…LVVT, PTLS…SDPL, PSLL…DPLD, and PSLS…SEPL. At 24–446 the chain is on the extracellular side; it reads ENLLKPILWA…PHLQDYTVEN (423 aa). A disulfide bridge connects residues cysteine 49 and cysteine 98. N-linked (GlcNAc...) asparagine glycosylation occurs at asparagine 138. A disulfide bond links cysteine 143 and cysteine 195. N-linked (GlcNAc...) asparagine glycosylation is found at asparagine 239, asparagine 279, and asparagine 300. Cysteine 244 and cysteine 295 are oxidised to a cystine. Cysteine 344 and cysteine 395 form a disulfide bridge. At tyrosine 404 the chain carries 3'-nitrotyrosine. The chain crosses the membrane as a helical span at residues 447 to 467; the sequence is LIRMGVAGLVLLFLGILLFEA. The Cytoplasmic segment spans residues 468–499; it reads QHSQRSPPRCSQEANSRKDNAPFRVVEPWEQI.

In terms of assembly, interacts with FCER1G; this stabilizes the expression of both proteins at the cell membrane. Interacts with BST2; leads to activation of LILRA4-mediated signaling and down-regulation of the innate immune response to viral pathogens. In terms of tissue distribution, detected on plasmacytoid dendritic cells (at protein level). Detected on plasmacytoid dendritic cells, but not on monocytes or B cells.

Its subcellular location is the cell membrane. Its function is as follows. Functions coreceptor to limit the innate immune responses to viral infections; signaling occurs via FCER1G. Down-regulates the production of IFNA1, IFNA2, IFNA4, IFNB1 and TNF by plasmacytoid dendritic cells that have been exposed to influenza virus or cytidine-phosphate-guanosine (CpG) dinucleotides, indicating it functions as a negative regulator of TLR7 and TLR9 signaling cascades. Down-regulates interferon production in response to interaction with BST2 on HIV-1 infected cells. Activates a signaling cascade in complex with FCER1G that results in phosphorylation of Src family and Syk kinases and thereby triggers mobilization of intracellular Ca(2+). Does not interfere with the differentiation of plasmacytoid dendritic cells into antigen-presenting cells. The protein is Leukocyte immunoglobulin-like receptor subfamily A member 4 of Homo sapiens (Human).